The chain runs to 357 residues: Glutamine synthetase root isozyme B (357 aa).

In terms of domain architecture, GS beta-grasp spans 19–99 (IIAEYIWVGG…VICDVYTPAG (81 aa)). The region spanning 106–357 (KRYNAAKIFS…AETTILWKKS (252 aa)) is the GS catalytic domain.

It belongs to the glutamine synthetase family. As to quaternary structure, homooctamer.

It is found in the cytoplasm. The catalysed reaction is L-glutamate + NH4(+) + ATP = L-glutamine + ADP + phosphate + H(+). The protein is Glutamine synthetase root isozyme B (GS3B) of Pisum sativum (Garden pea).